The following is a 305-amino-acid chain: Dermonecrotic toxin LiSicTox-betaID1 (305 aa).

The N-terminal stretch at 1–18 (MQLFIILCLAGSAVQLEG) is a signal peptide. The propeptide occupies 19 to 26 (TELDGVER). Residue H38 is part of the active site. Residues E58 and D60 each coordinate Mg(2+). The active-site Nucleophile is the H74. 2 disulfide bridges follow: C78/C84 and C80/C223. D118 serves as a coordination point for Mg(2+).

The protein belongs to the arthropod phospholipase D family. Class II subfamily. Class IIb sub-subfamily. Mg(2+) serves as cofactor. Expressed by the venom gland.

The protein resides in the secreted. The enzyme catalyses an N-(acyl)-sphingosylphosphocholine = an N-(acyl)-sphingosyl-1,3-cyclic phosphate + choline. It catalyses the reaction an N-(acyl)-sphingosylphosphoethanolamine = an N-(acyl)-sphingosyl-1,3-cyclic phosphate + ethanolamine. The catalysed reaction is a 1-acyl-sn-glycero-3-phosphocholine = a 1-acyl-sn-glycero-2,3-cyclic phosphate + choline. It carries out the reaction a 1-acyl-sn-glycero-3-phosphoethanolamine = a 1-acyl-sn-glycero-2,3-cyclic phosphate + ethanolamine. Functionally, dermonecrotic toxins cleave the phosphodiester linkage between the phosphate and headgroup of certain phospholipids (sphingolipid and lysolipid substrates), forming an alcohol (often choline) and a cyclic phosphate. This toxin acts on sphingomyelin (SM) with low activity. It may also act on ceramide phosphoethanolamine (CPE), lysophosphatidylcholine (LPC) and lysophosphatidylethanolamine (LPE), but not on lysophosphatidylserine (LPS), and lysophosphatidylglycerol (LPG). It acts by transphosphatidylation, releasing exclusively cyclic phosphate products as second products. Has no or weak activities in inducing dermonecrosis, hemolysis, inflammatory response, platelet aggregation and increase in vessel permeability. In vivo, shows no lethality when injected at higher dose into mice. The sequence is that of Dermonecrotic toxin LiSicTox-betaID1 from Loxosceles intermedia (Brown spider).